The following is a 461-amino-acid chain: Ribonuclease inhibitor (461 aa).

An N-acetylserine modification is found at serine 2. Residues 2-11 form a 2 X 5 AA tandem repeats of S-L-D-I-Q region; it reads SLDIQSLDIQ. LRR repeat units follow at residues 20–48, 49–76, 77–105, 106–133, 134–162, 163–190, 191–219, 220–247, 248–276, 277–304, 305–333, 334–361, 362–390, 391–418, and 419–447; these read WAEL…CKDI, SSAL…VHCV, LQGL…CGVL, SSTL…LQLL, CEGL…CKPL, ASVL…VRVL, CQGL…CRDL, CGIV…MAEL, CPGL…CGDL, CRVL…ARLL, CETL…CSHF, SSVL…VQEL, CQGL…CSSL, AATL…ILQL, and VESV…EDRL. The residue at position 91 (serine 91) is a Phosphoserine.

In terms of assembly, forms high-affinity heterodimers with RNASE1, ANG and RNASE2.

It is found in the cytoplasm. It localises to the nucleus. Functionally, ribonuclease inhibitor which inhibits RNASE1, RNASE2 and angiogenin (ANG). May play a role in redox homeostasis. Required to inhibit the cytotoxic tRNA ribonuclease activity of ANG in the cytoplasm in absence of stress. Relocates to the nucleus in response to stress, relieving inhibition of ANG in the cytoplasm, and inhibiting the angiogenic activity of ANG in the nucleus. This Pan troglodytes (Chimpanzee) protein is Ribonuclease inhibitor (RNH1).